A 203-amino-acid chain; its full sequence is Inosine triphosphate pyrophosphatase (203 aa).

T10–K15 is an ITP binding site. Residue E40 coordinates Mg(2+). Residues K52, D68–T69, K85, F145–D148, K168, and H173–R174 contribute to the ITP site.

It belongs to the HAM1 NTPase family. As to quaternary structure, homodimer. The cofactor is Mg(2+). Mn(2+) is required as a cofactor.

It localises to the cytoplasm. The catalysed reaction is ITP + H2O = IMP + diphosphate + H(+). The enzyme catalyses dITP + H2O = dIMP + diphosphate + H(+). It catalyses the reaction XTP + H2O = XMP + diphosphate + H(+). In terms of biological role, pyrophosphatase that hydrolyzes non-canonical purine nucleotides such as inosine triphosphate (ITP), deoxyinosine triphosphate (dITP) or xanthosine 5'-triphosphate (XTP) to their respective monophosphate derivatives. The enzyme does not distinguish between the deoxy- and ribose forms. Probably excludes non-canonical purines from RNA and DNA precursor pools, thus preventing their incorporation into RNA and DNA and avoiding chromosomal lesions. This chain is Inosine triphosphate pyrophosphatase, found in Nematostella vectensis (Starlet sea anemone).